A 201-amino-acid polypeptide reads, in one-letter code: Protamine-like protein 99C (201 aa).

Residues 93–143 form a disordered region; sequence GGQQSSCQRQSPSARLRESERRSSRSKTLCRSAKNRQRGKPKPQQSKRRLS. Polar residues predominate over residues 94–104; the sequence is GQQSSCQRQSP. A compositionally biased stretch (basic residues) spans 125-143; the sequence is AKNRQRGKPKPQQSKRRLS.

It belongs to the UPF0771 family.

The protein resides in the nucleus. Its subcellular location is the chromosome. Regulates chromatin compaction in spermatid nuclei and is essential for male fertility. Functions in parallel with other chromatin-condensing proteins such as ProtA, ProtB and Mst77F. This is Protamine-like protein 99C from Drosophila melanogaster (Fruit fly).